Consider the following 467-residue polypeptide: Glutamine synthetase (467 aa).

The GS beta-grasp domain maps to Glu14–Thr98. A GS catalytic domain is found at Pro106 to Cys467. Residues Glu131 and Glu133 each contribute to the Mg(2+) site. Position 209 (Asp209) interacts with ATP. Mg(2+) is bound by residues Glu214 and Glu221. Residues Asn265–Gly266 and Gly266 each bind L-glutamate. His270 is a binding site for Mg(2+). ATP-binding positions include Asn272 to Ser274 and Ser274. The L-glutamate site is built by Arg320, Glu326, and Arg338. Residues Arg338 and Arg343 each coordinate ATP. Glu356 provides a ligand contact to Mg(2+). Arg358 contacts L-glutamate. An O-AMP-tyrosine modification is found at Tyr396.

Belongs to the glutamine synthetase family. As to quaternary structure, oligomer of 12 subunits arranged in the form of two hexameric ring. The cofactor is Mg(2+).

It localises to the cytoplasm. It carries out the reaction L-glutamate + NH4(+) + ATP = L-glutamine + ADP + phosphate + H(+). Its activity is regulated as follows. The activity of this enzyme could be controlled by adenylation under conditions of abundant glutamine. Catalyzes the ATP-dependent biosynthesis of glutamine from glutamate and ammonia. The protein is Glutamine synthetase of Cereibacter sphaeroides (Rhodobacter sphaeroides).